The sequence spans 318 residues: Probable cell division protein WhiA (318 aa).

The H-T-H motif DNA-binding region spans 281–314 (SLKELGEMLSPPVGKSGVNHRLRRIEKIAEELSK).

Belongs to the WhiA family.

Involved in cell division and chromosome segregation. This is Probable cell division protein WhiA from Clostridium tetani (strain Massachusetts / E88).